The chain runs to 230 residues: Large ribosomal subunit protein uL1 (230 aa).

It belongs to the universal ribosomal protein uL1 family. As to quaternary structure, part of the 50S ribosomal subunit.

Its function is as follows. Binds directly to 23S rRNA. The L1 stalk is quite mobile in the ribosome, and is involved in E site tRNA release. In terms of biological role, protein L1 is also a translational repressor protein, it controls the translation of the L11 operon by binding to its mRNA. This chain is Large ribosomal subunit protein uL1, found in Ligilactobacillus salivarius (strain UCC118) (Lactobacillus salivarius).